Reading from the N-terminus, the 663-residue chain is Glutamate-rich protein 6 (663 aa).

Disordered regions lie at residues 1 to 74 (MAHL…ETFS) and 106 to 136 (LTST…HKSF). Positions 20–69 (ESEEELEEEEEEEEVEEEEEEVEEEEEEVEEEEEEVVEEELVGEEQELEA) are enriched in acidic residues. The segment covering 112 to 132 (PSQSATSTETPSASPPSSTSS) has biased composition (low complexity).

This sequence belongs to the ERICH6 family.

Its subcellular location is the nucleus. The protein is Glutamate-rich protein 6 (ERICH6) of Homo sapiens (Human).